Reading from the N-terminus, the 530-residue chain is Portal protein (530 aa).

Belongs to the siphoviridae portal protein family. As to quaternary structure, homododecamer. Interacts with the terminase complex composed of two small and one large terminase subunits. Proteolytically cleaved by the viral protease during capsid maturation.

It is found in the virion. In terms of biological role, forms the portal vertex of the capsid. This portal plays critical roles in head assembly, genome packaging, neck/tail attachment, and genome ejection. The portal protein multimerizes as a single ring-shaped homododecamer arranged around a central channel. Binds to the terminase subunits to form the packaging machine. The protein is Portal protein of Escherichia phage N15 (Bacteriophage N15).